We begin with the raw amino-acid sequence, 208 residues long: Small ribosomal subunit protein eS1 (208 aa).

Belongs to the eukaryotic ribosomal protein eS1 family.

The protein is Small ribosomal subunit protein eS1 of Saccharolobus solfataricus (strain ATCC 35092 / DSM 1617 / JCM 11322 / P2) (Sulfolobus solfataricus).